We begin with the raw amino-acid sequence, 78 residues long: Large ribosomal subunit protein uL23 (78 aa).

The protein belongs to the universal ribosomal protein uL23 family. In terms of assembly, part of the 50S ribosomal subunit. Contacts protein L29.

Its function is as follows. Binds to 23S rRNA. One of the proteins that surrounds the polypeptide exit tunnel on the outside of the ribosome. The chain is Large ribosomal subunit protein uL23 from Nanoarchaeum equitans (strain Kin4-M).